Here is a 422-residue protein sequence, read N- to C-terminus: uncharacterized protein (422 aa).

12 consecutive transmembrane segments (helical) span residues I23 to D43, A47 to V67, A90 to M110, L112 to P132, A151 to P171, S172 to I192, I228 to A248, I263 to L283, Y291 to I308, V318 to I340, V352 to G372, and G381 to F401.

This sequence belongs to the major facilitator superfamily.

It localises to the cell membrane. This is an uncharacterized protein from Bacillus subtilis (strain 168).